Reading from the N-terminus, the 189-residue chain is Leucine repeat adapter protein 25 (189 aa).

Ser-28 carries the phosphoserine modification. The disordered stretch occupies residues 54-82; it reads ELSRAARAPDGPRHAAGSANSGSAAGPRR. The span at 68 to 79 shows a compositional bias: low complexity; the sequence is AAGSANSGSAAG. The stretch at 86-114 is one LRR repeat; sequence LDSALAALRKEMVGLRQLDMSLLCQLWGL. The tract at residues 136–175 is disordered; sequence SSLHSDSSYPPDAGLSDDEEPPDASLPPDPPPLTVPQTHN. A compositionally biased stretch (pro residues) spans 159 to 169; that stretch reads ASLPPDPPPLT. Residue Ser-188 is modified to Phosphoserine.

Belongs to the FAM89 family. Interacts with SKI. Interacts (via LRR repeat) with CDC42BPA (via AGC-kinase C-terminal domain), CDC42BPB (via AGC-kinase C-terminal domain) and LIMK1 (via LIM zinc-binding domains). Forms a tripartite complex with CDC42BPA, CDC42BPB and LIMK1. In terms of assembly, (Microbial infection) Interacts with mouse mammary tumor virus (MMTV) envelope glycoprotein gp70. In terms of tissue distribution, widely expressed. Expressed in the early postnatal brain.

The protein localises to the cytoplasm. The protein resides in the cell projection. It is found in the lamellipodium. It localises to the cell surface. Its function is as follows. Negatively regulates TGF-beta-induced signaling; in cooperation with SKI prevents the translocation of SMAD2 from the nucleus to the cytoplasm in response to TGF-beta. Acts as an adapter that mediates the specific recognition of LIMK1 by CDC42BPA and CDC42BPB in the lamellipodia. LRAP25-mediated CDC42BPA/CDC42BPB targeting to LIMK1 and the lamellipodium results in LIMK1 activation and the subsequent phosphorylation of CFL1 which is important for lamellipodial F-actin regulation. In terms of biological role, (Microbial infection) May be a receptor for mouse mammary tumor virus (MMTV). The sequence is that of Leucine repeat adapter protein 25 from Mus musculus (Mouse).